The primary structure comprises 275 residues: 4-hydroxy-tetrahydrodipicolinate reductase (275 aa).

NAD(+) contacts are provided by residues 13 to 18 and 108 to 110; these read GAAGKM and GTT. Catalysis depends on H164, which acts as the Proton donor/acceptor. Residue H165 participates in (S)-2,3,4,5-tetrahydrodipicolinate binding. The active-site Proton donor is K168. 174-175 is a (S)-2,3,4,5-tetrahydrodipicolinate binding site; that stretch reads GT.

It belongs to the DapB family.

The protein resides in the cytoplasm. The catalysed reaction is (S)-2,3,4,5-tetrahydrodipicolinate + NAD(+) + H2O = (2S,4S)-4-hydroxy-2,3,4,5-tetrahydrodipicolinate + NADH + H(+). It carries out the reaction (S)-2,3,4,5-tetrahydrodipicolinate + NADP(+) + H2O = (2S,4S)-4-hydroxy-2,3,4,5-tetrahydrodipicolinate + NADPH + H(+). Its pathway is amino-acid biosynthesis; L-lysine biosynthesis via DAP pathway; (S)-tetrahydrodipicolinate from L-aspartate: step 4/4. In terms of biological role, catalyzes the conversion of 4-hydroxy-tetrahydrodipicolinate (HTPA) to tetrahydrodipicolinate. This Cyanothece sp. (strain PCC 7425 / ATCC 29141) protein is 4-hydroxy-tetrahydrodipicolinate reductase.